Consider the following 316-residue polypeptide: Protoheme IX farnesyltransferase 2 (316 aa).

Over residues Met-1–Ala-15 the composition is skewed to polar residues. Residues Met-1 to Ser-24 form a disordered region. 7 helical membrane passes run Ile-62–Phe-82, Ile-117–Phe-137, Ile-163–Ile-183, Ile-188–Ile-208, Thr-231–Ser-251, Leu-252–Ile-272, and Leu-293–Phe-313.

Belongs to the UbiA prenyltransferase family. Protoheme IX farnesyltransferase subfamily. Interacts with CtaA.

The protein localises to the cell membrane. The catalysed reaction is heme b + (2E,6E)-farnesyl diphosphate + H2O = Fe(II)-heme o + diphosphate. The protein operates within porphyrin-containing compound metabolism; heme O biosynthesis; heme O from protoheme: step 1/1. Converts heme B (protoheme IX) to heme O by substitution of the vinyl group on carbon 2 of heme B porphyrin ring with a hydroxyethyl farnesyl side group. This is Protoheme IX farnesyltransferase 2 from Lysinibacillus sphaericus (strain C3-41).